The chain runs to 124 residues: Small ribosomal subunit protein uS12 (124 aa).

Asp-89 carries the post-translational modification 3-methylthioaspartic acid. The tract at residues 104–124 (TAGVKDRRQSRSKYGAKTPKE) is disordered.

The protein belongs to the universal ribosomal protein uS12 family. As to quaternary structure, part of the 30S ribosomal subunit. Contacts proteins S8 and S17. May interact with IF1 in the 30S initiation complex.

In terms of biological role, with S4 and S5 plays an important role in translational accuracy. Functionally, interacts with and stabilizes bases of the 16S rRNA that are involved in tRNA selection in the A site and with the mRNA backbone. Located at the interface of the 30S and 50S subunits, it traverses the body of the 30S subunit contacting proteins on the other side and probably holding the rRNA structure together. The combined cluster of proteins S8, S12 and S17 appears to hold together the shoulder and platform of the 30S subunit. The protein is Small ribosomal subunit protein uS12 of Parasynechococcus marenigrum (strain WH8102).